Consider the following 329-residue polypeptide: MSFFSFGQSAEIDIVLNDAETRKKAEHKTEDGKKDKYFLFYDGETVSGKVNVTLKTPGKRLEHQGFKIEFIGQIELYYDRGNHHEFVSLVKDLARPGEMAQSQTFDFEFTHVEKPYESYTGQNVKLRYFLRATVSRRLNDICKEMDIVVHTLSTYPELNSSIKMEVGIEDCLHIEFEYNKSKYHLKDVIVGKIYFLLVRIKIKHMEIDIIKRETTGTGPNVYHENDTIAKYEIMDGAPVRGESIPIRLFLAGYEMTPTMRDINKKFSVRYYLNLVLIDEEERRYFKQQEITLWREGDVARKSMSHQAAIASQRFEGSEKTLPQAKEDSN.

This sequence belongs to the VPS26 family.

The protein resides in the cytoplasm. It is found in the membrane. Probable component of the retromer complex, a complex required to retrieve lysosomal enzyme receptors (IGF2R and M6PR) from endosomes to the trans-Golgi network. The protein is Vacuolar protein sorting-associated protein 26B-like (vps26bl) of Danio rerio (Zebrafish).